The following is a 202-amino-acid chain: N-(5'-phosphoribosyl)anthranilate isomerase (202 aa).

It belongs to the TrpF family.

It catalyses the reaction N-(5-phospho-beta-D-ribosyl)anthranilate = 1-(2-carboxyphenylamino)-1-deoxy-D-ribulose 5-phosphate. The protein operates within amino-acid biosynthesis; L-tryptophan biosynthesis; L-tryptophan from chorismate: step 3/5. In Listeria monocytogenes serotype 4a (strain HCC23), this protein is N-(5'-phosphoribosyl)anthranilate isomerase.